We begin with the raw amino-acid sequence, 456 residues long: Alcohol acyltransferase 16 (456 aa).

Catalysis depends on proton acceptor residues His167 and Asp382.

It belongs to the plant acyltransferase family. Expressed in fruit.

The catalysed reaction is 3-(methylsulfanyl)propanoyl-CoA + butan-1-ol = butyl 3-(methylsulfanyl)propanoate + CoA. It carries out the reaction ethanol + benzoyl-CoA = ethyl benzoate + CoA. The enzyme catalyses butan-1-ol + benzoyl-CoA = butyl benzoate + CoA. It catalyses the reaction 2-(methylsulfanyl)acetyl-CoA + butan-1-ol = butyl 2-(methylsulfanyl)acetate + CoA. Functionally, involved in the biosynthesis of volatile esters which confer kiwifruit flavor. Alcohol acyl transferase that can use a wide range of alcohols as substrate to produce esters. Exhibits benzoyl-CoA:alcohol O-acyltransferase activity. The polypeptide is Alcohol acyltransferase 16 (Actinidia chinensis var. chinensis (Chinese soft-hair kiwi)).